The following is a 40-amino-acid chain: MSAGSGRIPLWVVATIAGLGVITVVGIFFYGAYAGLGSSI.

A helical transmembrane segment spans residues I8 to F28.

It belongs to the PsbJ family. As to quaternary structure, PSII is composed of 1 copy each of membrane proteins PsbA, PsbB, PsbC, PsbD, PsbE, PsbF, PsbH, PsbI, PsbJ, PsbK, PsbL, PsbM, PsbT, PsbX, PsbY, PsbZ, Psb30/Ycf12, peripheral proteins PsbO, CyanoQ (PsbQ), PsbU, PsbV and a large number of cofactors. It forms dimeric complexes.

The protein localises to the cellular thylakoid membrane. In terms of biological role, one of the components of the core complex of photosystem II (PSII). PSII is a light-driven water:plastoquinone oxidoreductase that uses light energy to abstract electrons from H(2)O, generating O(2) and a proton gradient subsequently used for ATP formation. It consists of a core antenna complex that captures photons, and an electron transfer chain that converts photonic excitation into a charge separation. In Trichormus variabilis (strain ATCC 29413 / PCC 7937) (Anabaena variabilis), this protein is Photosystem II reaction center protein J.